The primary structure comprises 247 residues: Neurotrophic factor BDNF precursor form (247 aa).

The N-terminal stretch at 1 to 18 is a signal peptide; it reads MTILFLTMVISYFGCMKA. Positions 19–128 are excised as a propeptide; it reads APMKEANIRG…AANMSMRVRR (110 aa). Residue N121 is glycosylated (N-linked (GlcNAc...) asparagine). 3 disulfide bridges follow: C141/C208, C186/C237, and C196/C239.

It belongs to the NGF-beta family. As to quaternary structure, monomers and homodimers. Binds to NTRK2/TRKB. Can form heterodimers with other neurotrophin family members, such as NTF3 and NTF4 (in vitro), but the physiological relevance of this is not clear. BDNF precursor form: interacts with the heterodimer formed by NGFR and SORCS2. Post-translationally, N-glycosylated and glycosulfated, contrary to mature BDNF. In terms of processing, mature BDNF is produced by proteolytic removal of the propeptide, catalyzed by a FURIN family member. In addition, the precursor form is proteolytically cleaved within the propeptide, but this is not an obligatory intermediate for the production of mature BDNF. Can be converted into mature BDNF by plasmin (PLG). Detected in blood plasma and in saliva (at protein level). Brain. Highly expressed in hippocampus, amygdala, cerebral cortex and cerebellum. Also expressed in heart, lung, skeletal muscle, testis, prostate and placenta.

Its subcellular location is the secreted. Its function is as follows. Important signaling molecule that activates signaling cascades downstream of NTRK2. During development, promotes the survival and differentiation of selected neuronal populations of the peripheral and central nervous systems. Participates in axonal growth, pathfinding and in the modulation of dendritic growth and morphology. Major regulator of synaptic transmission and plasticity at adult synapses in many regions of the CNS. The versatility of BDNF is emphasized by its contribution to a range of adaptive neuronal responses including long-term potentiation (LTP), long-term depression (LTD), certain forms of short-term synaptic plasticity, as well as homeostatic regulation of intrinsic neuronal excitability. Functionally, important signaling molecule that activates signaling cascades downstream of NTRK2. Activates signaling cascades via the heterodimeric receptor formed by NGFR and SORCS2. Signaling via NGFR and SORCS2 plays a role in synaptic plasticity and long-term depression (LTD). Binding to NGFR and SORCS2 promotes neuronal apoptosis. Promotes neuronal growth cone collapse. In Homo sapiens (Human), this protein is Neurotrophic factor BDNF precursor form.